The chain runs to 197 residues: Zinc finger protein 581 (197 aa).

Residues 1-10 show a composition bias toward pro residues; sequence MLVLPSPCPQ. Residues 1-52 form a disordered region; the sequence is MLVLPSPCPQPLAFSSVETMEGPPRRTCRSPEPGPSSSIGSPQASSPPRPNH. Low complexity predominate over residues 35–44; it reads PSSSIGSPQA. C2H2-type zinc fingers lie at residues 87–109, 115–137, 145–167, and 173–196; these read YSCP…SITH, FECD…HSIH, HGCP…SRVH, and FQCP…RWKH.

It localises to the nucleus. Functionally, may be involved in transcriptional regulation. The sequence is that of Zinc finger protein 581 (ZNF581) from Homo sapiens (Human).